Consider the following 445-residue polypeptide: 6-phosphogluconate dehydrogenase, decarboxylating (445 aa).

NADP(+) contacts are provided by residues 1–4 (AVMG), 22–24 (NRS), 63–65 (VKA), and Asn-91. Residues Asn-91 and 117–119 (SGG) each bind substrate. Catalysis depends on Lys-172, which acts as the Proton acceptor. A substrate-binding site is contributed by 175–176 (HN). Glu-179 serves as the catalytic Proton donor. Substrate-binding residues include Tyr-180, Lys-249, Arg-276, Arg-434, and His-440.

It belongs to the 6-phosphogluconate dehydrogenase family. In terms of assembly, homodimer.

The enzyme catalyses 6-phospho-D-gluconate + NADP(+) = D-ribulose 5-phosphate + CO2 + NADPH. It functions in the pathway carbohydrate degradation; pentose phosphate pathway; D-ribulose 5-phosphate from D-glucose 6-phosphate (oxidative stage): step 3/3. Catalyzes the oxidative decarboxylation of 6-phosphogluconate to ribulose 5-phosphate and CO(2), with concomitant reduction of NADP to NADPH. The chain is 6-phosphogluconate dehydrogenase, decarboxylating (gnd) from Citrobacter amalonaticus.